Reading from the N-terminus, the 485-residue chain is tRNA sulfurtransferase (485 aa).

The THUMP domain maps to 61 to 165 (EELIALLQRI…DDKMMLVKAR (105 aa)). ATP is bound by residues 183–184 (LI), K265, G287, and Q296. A disulfide bond links C344 and C456. A Rhodanese domain is found at 404–483 (LGENEVILDI…FSNVRVFAKN (80 aa)). C456 serves as the catalytic Cysteine persulfide intermediate.

Belongs to the ThiI family.

It localises to the cytoplasm. It carries out the reaction [ThiI sulfur-carrier protein]-S-sulfanyl-L-cysteine + a uridine in tRNA + 2 reduced [2Fe-2S]-[ferredoxin] + ATP + H(+) = [ThiI sulfur-carrier protein]-L-cysteine + a 4-thiouridine in tRNA + 2 oxidized [2Fe-2S]-[ferredoxin] + AMP + diphosphate. The enzyme catalyses [ThiS sulfur-carrier protein]-C-terminal Gly-Gly-AMP + S-sulfanyl-L-cysteinyl-[cysteine desulfurase] + AH2 = [ThiS sulfur-carrier protein]-C-terminal-Gly-aminoethanethioate + L-cysteinyl-[cysteine desulfurase] + A + AMP + 2 H(+). It participates in cofactor biosynthesis; thiamine diphosphate biosynthesis. Catalyzes the ATP-dependent transfer of a sulfur to tRNA to produce 4-thiouridine in position 8 of tRNAs, which functions as a near-UV photosensor. Also catalyzes the transfer of sulfur to the sulfur carrier protein ThiS, forming ThiS-thiocarboxylate. This is a step in the synthesis of thiazole, in the thiamine biosynthesis pathway. The sulfur is donated as persulfide by IscS. In Haemophilus influenzae (strain PittGG), this protein is tRNA sulfurtransferase.